The following is a 95-amino-acid chain: Co-chaperonin GroES (95 aa).

Belongs to the GroES chaperonin family. As to quaternary structure, heptamer of 7 subunits arranged in a ring. Interacts with the chaperonin GroEL.

It is found in the cytoplasm. Together with the chaperonin GroEL, plays an essential role in assisting protein folding. The GroEL-GroES system forms a nano-cage that allows encapsulation of the non-native substrate proteins and provides a physical environment optimized to promote and accelerate protein folding. GroES binds to the apical surface of the GroEL ring, thereby capping the opening of the GroEL channel. This Rickettsia canadensis (strain McKiel) protein is Co-chaperonin GroES.